Consider the following 502-residue polypeptide: Protein MGF 505-5R (502 aa).

This sequence belongs to the asfivirus MGF 505 family.

Plays a role in virus cell tropism, and may be required for efficient virus replication in macrophages. In African swine fever virus (isolate Tick/Malawi/Lil 20-1/1983) (ASFV), this protein is Protein MGF 505-5R.